The chain runs to 257 residues: Staphylococcal secretory antigen SsaA (257 aa).

The signal sequence occupies residues 1 to 26; the sequence is MKKIATATIATAGIATFAFAHHDAQA. 8 tandem repeats follow at residues 73 to 75, 76 to 78, 84 to 86, 87 to 89, 90 to 92, 93 to 95, 96 to 98, and 99 to 101. The tract at residues 73–101 is 8 X 3 AA repeats of Y-[NS]-N; that stretch reads YNNYNNYNYYGYNNYSNYNNYSNYNNYNN. Residues 101 to 144 are disordered; it reads NYQSNNTQSQRTTQPTGGLGASYSTSSSNVHVTTTSAPSSNGVS. Residues 107-116 show a composition bias toward polar residues; that stretch reads TQSQRTTQPT. Low complexity predominate over residues 122–136; the sequence is SYSTSSSNVHVTTTS. A Peptidase C51 domain is found at 136–257; that stretch reads SAPSSNGVSL…SQAASYNYIH (122 aa).

The protein localises to the secreted. Not known; immunogenic protein expressed during sepsis and particularly during episodes of infective endocarditis. This is Staphylococcal secretory antigen SsaA (ssaA) from Staphylococcus epidermidis.